We begin with the raw amino-acid sequence, 450 residues long: MASVAVEPQLSVVTRVANLPLVSSTYDLVSSAYISRKDQYPYLKSLCEMAEKGMKTITSVAVTSALPIIQKLEPQIAVANTYACKGLDRIEEKLPILNQPTNQVVANAKGAMTGAKDAVTTTVTGAKDSVASTITGVVDRTKGAVTGSVEKTKSVVSGSINTVLRSRVMQLMSSGVENALTKSELLVDQYLPLTKDELEKEAKKVEGFDMVQKPSYYVRLGSLSTKLRSRAYQQALCRVEEAKRKGQETISQLHSAFNLSELARKNVHNANQKIQDAQDKLYLSWLEWKRSIGYDDTDESHCAEHIESRTLAIARNLTQQLQTMCHTLLSNIQGLPQNIQDRANHLGVMAGDIYSVFRNAASFKEVSDGLLASSKGQLQKMKESLDDVMDYLVNNTPLNWLVGPFYPQVTESESAQAPGTTRRPGRWSRKHPKPVPVSNAEGSQPDDSSS.

Alanine 2 carries the post-translational modification N-acetylalanine. The residue at position 215 (serine 215) is a Phosphoserine. Tyrosine 232 carries the phosphotyrosine modification. The disordered stretch occupies residues 411 to 450 (ESESAQAPGTTRRPGRWSRKHPKPVPVSNAEGSQPDDSSS). Positions 423-433 (RPGRWSRKHPK) are enriched in basic residues. A compositionally biased stretch (polar residues) spans 440–450 (AEGSQPDDSSS).

The protein belongs to the perilipin family. Interacts with IRGC. Post-translationally, acylated; primarily with C14, C16 and C18 fatty acids. Phosphorylation at Tyr-232 by isoform 1 of CHKA (CHKalpha2) promotes dissociation from lipid droplets: dissociation is followed by recruitment of autophagosome machinery to lipid droplets and subsequent lipid droplet lipolysis. In terms of processing, polyubiquitination of Nt-acetylatable A-PLIN2 by MARCHF6 lead to degradation by 26S proteasomes. As to expression, milk lipid globules.

The protein localises to the membrane. The protein resides in the lipid droplet. Functionally, structural component of lipid droplets, which is required for the formation and maintenance of lipid storage droplets. This is Perilipin-2 (PLIN2) from Bos taurus (Bovine).